Reading from the N-terminus, the 196-residue chain is T-cell surface glycoprotein CD3 epsilon chain (196 aa).

Positions 1 to 21 (MPSGNLWKVLGLCLLSVGAWG) are cleaved as a signal peptide. The Extracellular segment spans residues 22–116 (QEDIERPDED…VCENCVEVDL (95 aa)). An Ig-like domain is found at 28 to 102 (PDEDTQKTFK…VGEKTSHRLY (75 aa)). An intrachain disulfide couples Cys-49 to Cys-91. A helical transmembrane segment spans residues 117 to 137 (MAVVTIIVVDICITLGLLMVV). Residues 138 to 196 (YYYSKSRKAKAMPVTRGAGAGGRPRGQNRERPPPVPNPDYEPIRKGQRDLYSGLNQRGR) lie on the Cytoplasmic side of the membrane. The segment at 150-196 (PVTRGAGAGGRPRGQNRERPPPVPNPDYEPIRKGQRDLYSGLNQRGR) is disordered. An NUMB-binding region region spans residues 164 to 181 (QNRERPPPVPNPDYEPIR). Residues 167-194 (ERPPPVPNPDYEPIRKGQRDLYSGLNQR) form the ITAM domain. The tract at residues 168–175 (RPPPVPNP) is proline-rich sequence. Phosphotyrosine occurs at positions 177 and 188.

The TCR-CD3 complex is composed of a CD3D/CD3E and a CD3G/CD3E heterodimers that preferentially associate with TCRalpha and TCRbeta, respectively, to form TCRalpha/CD3E/CD3G and TCRbeta/CD3G/CD3E trimers. In turn, the hexamer interacts with CD3Z homodimer to form the TCR-CD3 complex. Alternatively, TCRalpha and TCRbeta can be replaced by TCRgamma and TCRdelta. Interacts with CD6. Interacts (via Proline-rich sequence) with NCK1; the interaction is ligand dependent but independent of tyrosine kinase activation. Post-translationally, phosphorylated on Tyr residues after T-cell receptor triggering by LCK in association with CD4/CD8.

The protein resides in the cell membrane. Functionally, part of the TCR-CD3 complex present on T-lymphocyte cell surface that plays an essential role in adaptive immune response. When antigen presenting cells (APCs) activate T-cell receptor (TCR), TCR-mediated signals are transmitted across the cell membrane by the CD3 chains CD3D, CD3E, CD3G and CD3Z. All CD3 chains contain immunoreceptor tyrosine-based activation motifs (ITAMs) in their cytoplasmic domain. Upon TCR engagement, these motifs become phosphorylated by Src family protein tyrosine kinases LCK and FYN, resulting in the activation of downstream signaling pathways. In addition of this role of signal transduction in T-cell activation, CD3E plays an essential role in correct T-cell development. Also participates in internalization and cell surface down-regulation of TCR-CD3 complexes via endocytosis sequences present in CD3E cytosolic region. In addition to its role as a TCR coreceptor, it serves as a receptor for ITPRIPL1. Ligand recognition inhibits T-cell activation by promoting interaction with NCK1, which prevents CD3E-ZAP70 interaction and blocks the ERK-NFkB signaling cascade and calcium influx. This Sus scrofa (Pig) protein is T-cell surface glycoprotein CD3 epsilon chain (CD3E).